The primary structure comprises 437 residues: MKKKSAPTPLPPETANTSPAPIGATAGIRVENCYVFKSRLQEYAQKAGLQTPEYHTSKEGPSHEPVFKSTVVINNTSYGSLPGFSNRKAAEQSAAEVALMEIVKSIPANANIPAVQETGLCKNLLQEYAQKMNYAIPSYICTKPASGLAPFLCTVEIGGIQYIGAAARTKKDAEIKAARTALLAIQGQSEGSANGATKYIVVPGKRVGKEVEKRPIETPKPLKAKKGGFKKKWNKRKFMKKDGQAVDVEKDEARVAGDAHDSDVLMQPTVITQEASCGTLFLQPCEEAKRVEDEPPRDIEMVQPDKENQHSDAALVQPDDEARVEQEPSRDISVVQPNEEAISAKQEPSIDAATLQPKEEAMKTGCVALVLCLNISVDPPDVIKISPCVRKECWIDPFSMAAPKALETIGKTLHSQYERWQPKARYKLQLDPTLEEV.

A disordered region spans residues methionine 1 to isoleucine 22. DRBM domains lie at valine 35–lysine 104 and leucine 120–glycine 187. Basic and acidic residues-rich tracts occupy residues alanine 288–histidine 310 and aspartate 320–arginine 330. The disordered stretch occupies residues alanine 288 to aspartate 331.

Its function is as follows. Binds double-stranded RNA. The sequence is that of Double-stranded RNA-binding protein 3 (DRB3) from Oryza sativa subsp. japonica (Rice).